Consider the following 320-residue polypeptide: Methionyl-tRNA formyltransferase (320 aa).

Position 111-114 (111-114) interacts with (6S)-5,6,7,8-tetrahydrofolate; it reads SLLP.

This sequence belongs to the Fmt family.

The catalysed reaction is L-methionyl-tRNA(fMet) + (6R)-10-formyltetrahydrofolate = N-formyl-L-methionyl-tRNA(fMet) + (6S)-5,6,7,8-tetrahydrofolate + H(+). Its function is as follows. Attaches a formyl group to the free amino group of methionyl-tRNA(fMet). The formyl group appears to play a dual role in the initiator identity of N-formylmethionyl-tRNA by promoting its recognition by IF2 and preventing the misappropriation of this tRNA by the elongation apparatus. The protein is Methionyl-tRNA formyltransferase of Bifidobacterium adolescentis (strain ATCC 15703 / DSM 20083 / NCTC 11814 / E194a).